Consider the following 249-residue polypeptide: Zinc finger protein mnm-2 (249 aa).

Positions 20 to 65 are disordered; sequence PKEELETEEEDEEEDEEEELSSSEVTSENDMETESASSSASSVGQP. Over residues 24–52 the composition is skewed to acidic residues; the sequence is LETEEEDEEEDEEEELSSSEVTSENDMET. 3 C2H2-type zinc fingers span residues 168 to 190, 196 to 218, and 224 to 246; these read YRCDVCDKTFSRSNTLITHKRIH, FKCEHCGRAFRQPGNLTRHRLTH, and YVCGLCDKAFNRASNLHTHMRTH.

In terms of tissue distribution, in larva and adult, expressed in the M3 pharyngeal motor neurons, extrapharyngeal neurons in the head, the PQR tail neurons, rectal cells, vulva cells, the spermetheca-uterine valve, body wall muscle cells and neurons of the ventral nerve cord. In the embryo, expressed in pharyngeal cells, extrapharyngeal head neurons and within the tail. Expressed in body wall muscle cells during late embryonic stages. Expressed in the mother cells of the M2 and M3 pharyngeal motor neurons precursor cells at the embryonic bean stage and subsequently in the M2 and M3 cells as they are born. Expression is sustained only in the two M3 cells up to at least the 5-day-old adult. In contrast, expression gradually declines in the M2 cells beginning from the time of their birth, and is completely undetectable by the time of hatching.

The protein localises to the nucleus. In terms of biological role, required in the M3 pharyngeal motor neuron to guide the growth cone of the sister M2 motor neuron during axon development. This Caenorhabditis elegans protein is Zinc finger protein mnm-2.